The primary structure comprises 1665 residues: Mediator of RNA polymerase II transcription subunit 13 (1665 aa).

4 disordered regions span residues 411 to 460 (KETE…IDKN), 482 to 512 (INLDSKIMPPDSTSEEAVPDKENFKPKETKP), 551 to 580 (TVSQSAVTTNPPSVGSAPGPAPGPAPGTET), and 673 to 781 (LDSS…NQIS). Residues 415-445 (PENESENDMEIDDLFGGDESDDNDDLEEAGN) are compositionally biased toward acidic residues. Basic and acidic residues predominate over residues 499–512 (VPDKENFKPKETKP). A compositionally biased stretch (low complexity) spans 551-568 (TVSQSAVTTNPPSVGSAP). A compositionally biased stretch (acidic residues) spans 682 to 720 (EGGEDIEDDDNDYEDEGDDDEEEEGEEEEEEESDEDEIS). A compositionally biased stretch (polar residues) spans 728–762 (LKLNTQNESVPPQQSNYNPVNITDSGSNTTNNITD).

The protein belongs to the Mediator complex subunit 13 family. In terms of assembly, component of the SRB8-11 complex, which itself associates with the Mediator complex.

It is found in the nucleus. In terms of biological role, component of the SRB8-11 complex. The SRB8-11 complex is a regulatory module of the Mediator complex which is itself involved in regulation of basal and activated RNA polymerase II-dependent transcription. The SRB8-11 complex may be involved in the transcriptional repression of a subset of genes regulated by Mediator. It may inhibit the association of the Mediator complex with RNA polymerase II to form the holoenzyme complex. In Candida albicans (strain SC5314 / ATCC MYA-2876) (Yeast), this protein is Mediator of RNA polymerase II transcription subunit 13 (SSN2).